Reading from the N-terminus, the 401-residue chain is tRNA-specific 2-thiouridylase MnmA (401 aa).

ATP is bound by residues 13-20 (GLSGGVDS) and methionine 39. The interval 99–101 (NPD) is interaction with target base in tRNA. Cysteine 104 functions as the Nucleophile in the catalytic mechanism. Cysteine 104 and cysteine 202 form a disulfide bridge. ATP is bound at residue glycine 128. The interval 152-154 (KDQ) is interaction with tRNA. Catalysis depends on cysteine 202, which acts as the Cysteine persulfide intermediate. The interval 329-330 (RY) is interaction with tRNA.

It belongs to the MnmA/TRMU family.

It is found in the cytoplasm. The enzyme catalyses S-sulfanyl-L-cysteinyl-[protein] + uridine(34) in tRNA + AH2 + ATP = 2-thiouridine(34) in tRNA + L-cysteinyl-[protein] + A + AMP + diphosphate + H(+). In terms of biological role, catalyzes the 2-thiolation of uridine at the wobble position (U34) of tRNA, leading to the formation of s(2)U34. This chain is tRNA-specific 2-thiouridylase MnmA, found in Polaromonas sp. (strain JS666 / ATCC BAA-500).